Here is a 221-residue protein sequence, read N- to C-terminus: Ubiquitin-conjugating enzyme E2 S (221 aa).

The UBC core domain occupies 11-157 (QVLRLVYKEV…AHLLTEIHAM (147 aa)). The active-site Glycyl thioester intermediate is the cysteine 95. Residues 158 to 221 (GGTSGAPQEP…TDKKRALRRL (64 aa)) form a disordered region. Over residues 193-206 (GTGTNNSNISNTNI) the composition is skewed to low complexity. Over residues 208–221 (AKKKTDKKRALRRL) the composition is skewed to basic residues.

It belongs to the ubiquitin-conjugating enzyme family.

It carries out the reaction S-ubiquitinyl-[E1 ubiquitin-activating enzyme]-L-cysteine + [E2 ubiquitin-conjugating enzyme]-L-cysteine = [E1 ubiquitin-activating enzyme]-L-cysteine + S-ubiquitinyl-[E2 ubiquitin-conjugating enzyme]-L-cysteine.. The protein operates within protein modification; protein ubiquitination. In terms of biological role, catalyzes the covalent attachment of ubiquitin to other proteins. Acts as an essential factor of the anaphase promoting complex/cyclosome (APC/C), a cell cycle-regulated ubiquitin ligase that controls progression through mitosis. Acts by specifically elongating 'Lys-11'-linked polyubiquitin chains initiated by the E2 enzyme ube2c/ubch10 on APC/C substrates, enhancing the degradation of APC/C substrates by the proteasome and promoting mitotic exit. The polypeptide is Ubiquitin-conjugating enzyme E2 S (ube2s) (Danio rerio (Zebrafish)).